Here is a 520-residue protein sequence, read N- to C-terminus: Ribonuclease Y (520 aa).

A helical membrane pass occupies residues 3–23 (IVIVVISILLALIVGIVVGYL). Positions 81–118 (RMEAQKQENRLMQKEENLDRKSETLDKRESSLESKEQS) are enriched in basic and acidic residues. The tract at residues 81–125 (RMEAQKQENRLMQKEENLDRKSETLDKRESSLESKEQSLTEQQQQ) is disordered. The KH domain maps to 210 to 273 (TVSVVNLPND…EIARMALEKL (64 aa)). Residues 336–429 (GLKHSAEVAY…VAAADALSAA (94 aa)) enclose the HD domain.

It belongs to the RNase Y family.

Its subcellular location is the cell membrane. Functionally, endoribonuclease that initiates mRNA decay. The protein is Ribonuclease Y of Oceanobacillus iheyensis (strain DSM 14371 / CIP 107618 / JCM 11309 / KCTC 3954 / HTE831).